We begin with the raw amino-acid sequence, 1555 residues long: Bromodomain adjacent to zinc finger domain protein 1A (1555 aa).

A required for association with the CHRAC1/POLE3 complex region spans residues 1–128 (MPLLHRKPFV…EETVEVIRNN (128 aa)). The interval 1–128 (MPLLHRKPFV…EETVEVIRNN (128 aa)) is required for interaction with the CHRAC1-POLE3 heterodimer. Required for interaction with the CHRAC1-POLE3 heterodimer. Residues 1–133 (MPLLHRKPFV…VIRNNGTRLQ (133 aa)) are required for interaction with NCOR1. Positions 22–128 (EEVFYCKVTN…EETVEVIRNN (107 aa)) constitute a WAC domain. Ser-270 and Ser-284 each carry phosphoserine. The DDT domain maps to 422–488 (PEVFGDALMV…LTAIFQAMAE (67 aa)). A coiled-coil region spans residues 635-701 (IEDYVDVLRQ…EDEQRNSAAV (67 aa)). Composition is skewed to basic and acidic residues over residues 652–664 (LKAE…REAT) and 671–696 (RKEE…DEQR). Residues 652–751 (LKAEQHRKER…KRSRRGKVGQ (100 aa)) are disordered. The interval 668 to 935 (IRRRKEEKLK…QEKSRICAQL (268 aa)) is interaction with SMARCA5. The tract at residues 668 to 935 (IRRRKEEKLK…QEKSRICAQL (268 aa)) is required for interaction with SMARCA5 and formation of the CHRAC ISWI chromatin remodeling complex. Acidic residues-rich tracts occupy residues 705 to 714 (GEEEREDFDT) and 728 to 737 (PDVVTEDEDD). At Thr-732 the chain carries Phosphothreonine. Residues 773–798 (SADAEEALRQEQQQKEKELLDKIQSA) adopt a coiled-coil conformation. 2 disordered regions span residues 843–874 (PSSF…SSLD) and 944–969 (HFSD…CDIS). The segment covering 864 to 873 (SFLSESTSSL) has biased composition (low complexity). Residue Lys-954 forms a Glycyl lysine isopeptide (Lys-Gly) (interchain with G-Cter in SUMO2) linkage. Phosphoserine occurs at positions 962 and 963. A PHD-type zinc finger spans residues 1149 to 1199 (NARCKICRKKGDAENMVLCDGCDRGHHTYCVRPKLKAVPDGDWFCPECRPK). The segment at 1203-1429 (RRLSSRQRPS…LNRRSSGRQG (227 aa)) is disordered. Acidic residues predominate over residues 1214 to 1258 (ESDEEMEEGMEDDDDEVDDDDEEGQSEEEEYEVEQDEEDSDDDEA). The segment covering 1263-1277 (KRGRPQVRLPIKTKG) has biased composition (basic residues). Residue Ser-1282 is modified to Phosphoserine. Over residues 1297-1313 (SRSQQSTPKNTAKSASK) the composition is skewed to polar residues. Phosphoserine occurs at positions 1320, 1339, 1352, 1370, 1401, 1412, and 1416. Polar residues predominate over residues 1369–1386 (HSPSFTNFRVSTSRSSRQ). The 104-residue stretch at 1429-1532 (GGVHELSAFE…AFFHIQAQKL (104 aa)) folds into the Bromo domain. Thr-1546 carries the post-translational modification Phosphothreonine.

This sequence belongs to the WAL family. Component of the ACF-1 ISWI chromatin remodeling complex at least composed of SMARCA1 and BAZ1A, which regulates the spacing of histone octamers on the DNA template to facilitate access to DNA. Within the ACF-1 ISWI chromatin remodeling complex interacts with SMARCA1; the interaction is direct. Component of the ACF-5 ISWI chromatin remodeling complex (also called the ACF complex) at least composed of BAZ1A and SMARCA5/SNF2H, which regulates the spacing of histone octamers on the DNA template to facilitate access to DNA. Within the ACF-5 ISWI chromatin remodeling complex interacts with SMARCA5/SNF2H; the interaction is direct. Component of the CHRAC ISWI chromatin remodeling complex at least composed of SMARCA5/SNF2H, BAZ1A/ACF1, CHRAC1 and POLE3; the complex preferentially binds DNA through the CHRAC1-POLE3 heterodimer and possesses ATP-dependent nucleosome-remodeling activity. Within the complex interacts (via N-terminus) with POLE3-CHRAC1 heterodimer; the interaction is direct and is required for the complex to preferentially bind to DNA. Within the complex interacts with SMARCA5/SNF2H; the interaction is direct and promotes the interaction with the POLE3-CHRAC1 heterodimer. Interacts with NCOR1 (via its RD1 domain); the interaction corepresses a number of NCOR1-regulated genes.

It localises to the nucleus. Its function is as follows. Regulatory subunit of the ATP-dependent ACF-1 and ACF-5 ISWI chromatin remodeling complexes, which form ordered nucleosome arrays on chromatin and slide edge- and center-positioned histone octamers away from their original location on the DNA template to facilitate access to DNA during DNA-templated processes such as DNA replication, transcription, and repair. Both complexes regulate the spacing of nucleosomes along the chromatin and have the ability to slide mononucleosomes to the center of a DNA template in an ATP-dependent manner. The ACF-1 ISWI chromatin remodeling complex has a lower ATP hydrolysis rate than the ACF-5 ISWI chromatin remodeling complex. Has a role in sensing the length of DNA which flank nucleosomes, which modulates the nucleosome spacing activity of the ACF-5 ISWI chromatin remodeling complex. Involved in DNA replication and together with SMARCA5/SNF2H is required for replication of pericentric heterochromatin in S-phase. May have a role in nuclear receptor-mediated transcription repression. The protein is Bromodomain adjacent to zinc finger domain protein 1A (Baz1a) of Mus musculus (Mouse).